We begin with the raw amino-acid sequence, 256 residues long: Small ribosomal subunit protein uS2 (256 aa).

It belongs to the universal ribosomal protein uS2 family.

This Brucella melitensis biotype 1 (strain ATCC 23456 / CCUG 17765 / NCTC 10094 / 16M) protein is Small ribosomal subunit protein uS2.